The following is a 284-amino-acid chain: 4-hydroxy-3-methylbut-2-enyl diphosphate reductase (284 aa).

[4Fe-4S] cluster is bound at residue C12. 2 residues coordinate (2E)-4-hydroxy-3-methylbut-2-enyl diphosphate: H40 and H72. H40 and H72 together coordinate dimethylallyl diphosphate. The isopentenyl diphosphate site is built by H40 and H72. C94 lines the [4Fe-4S] cluster pocket. H122 is a binding site for (2E)-4-hydroxy-3-methylbut-2-enyl diphosphate. H122 serves as a coordination point for dimethylallyl diphosphate. H122 is an isopentenyl diphosphate binding site. The Proton donor role is filled by E124. T161 provides a ligand contact to (2E)-4-hydroxy-3-methylbut-2-enyl diphosphate. C193 contributes to the [4Fe-4S] cluster binding site. (2E)-4-hydroxy-3-methylbut-2-enyl diphosphate contacts are provided by S221, N223, and S264. Dimethylallyl diphosphate contacts are provided by S221, N223, and S264. S221, N223, and S264 together coordinate isopentenyl diphosphate.

This sequence belongs to the IspH family. The cofactor is [4Fe-4S] cluster.

The catalysed reaction is isopentenyl diphosphate + 2 oxidized [2Fe-2S]-[ferredoxin] + H2O = (2E)-4-hydroxy-3-methylbut-2-enyl diphosphate + 2 reduced [2Fe-2S]-[ferredoxin] + 2 H(+). The enzyme catalyses dimethylallyl diphosphate + 2 oxidized [2Fe-2S]-[ferredoxin] + H2O = (2E)-4-hydroxy-3-methylbut-2-enyl diphosphate + 2 reduced [2Fe-2S]-[ferredoxin] + 2 H(+). The protein operates within isoprenoid biosynthesis; dimethylallyl diphosphate biosynthesis; dimethylallyl diphosphate from (2E)-4-hydroxy-3-methylbutenyl diphosphate: step 1/1. It functions in the pathway isoprenoid biosynthesis; isopentenyl diphosphate biosynthesis via DXP pathway; isopentenyl diphosphate from 1-deoxy-D-xylulose 5-phosphate: step 6/6. Catalyzes the conversion of 1-hydroxy-2-methyl-2-(E)-butenyl 4-diphosphate (HMBPP) into a mixture of isopentenyl diphosphate (IPP) and dimethylallyl diphosphate (DMAPP). Acts in the terminal step of the DOXP/MEP pathway for isoprenoid precursor biosynthesis. This is 4-hydroxy-3-methylbut-2-enyl diphosphate reductase from Dehalococcoides mccartyi (strain ATCC BAA-2266 / KCTC 15142 / 195) (Dehalococcoides ethenogenes (strain 195)).